Consider the following 315-residue polypeptide: Neuroguidin (315 aa).

N-acetylalanine is present on alanine 2. Residues 5-42 (EVLESDLPNAVALLKNLQEQVMAVTAQVQTLTKKVQAK) are a coiled coil. Positions 41–174 (AKAYPTEKGL…KGTAKKYVPP (134 aa)) are necessary for interaction with EIF4E. Serine 121, serine 142, and serine 143 each carry phosphoserine. The disordered stretch occupies residues 123–174 (SENDPLRFKPHPSNMMSKLSSEDEEEDEAEEGQSGASGKKSGKGTAKKYVPP). Positions 144–153 (EDEEEDEAEE) are enriched in acidic residues. The stretch at 181 to 205 (YDETEAEREKKRLERAKRRALSSSV) forms a coiled coil. Serine 204 and serine 214 each carry phosphoserine. The tract at residues 252 to 315 (SKREKGRRKR…RKKKGFRRRR (64 aa)) is disordered. Residues 264 to 276 (VMSSQLHSLTHFS) are compositionally biased toward polar residues. Over residues 295–315 (TKKRKKIPKKGRKKKGFRRRR) the composition is skewed to basic residues.

It belongs to the SAS10 family. As to quaternary structure, part of the small subunit (SSU) processome, composed of more than 70 proteins and the RNA chaperone small nucleolar RNA (snoRNA) U3. Interacts with CPEB1 and EIF4E.

The protein localises to the nucleus. It is found in the nucleolus. The protein resides in the chromosome. It localises to the centromere. Its subcellular location is the cytoplasm. The protein localises to the cell projection. It is found in the axon. The protein resides in the dendrite. It localises to the filopodium. In terms of biological role, part of the small subunit (SSU) processome, first precursor of the small eukaryotic ribosomal subunit. During the assembly of the SSU processome in the nucleolus, many ribosome biogenesis factors, an RNA chaperone and ribosomal proteins associate with the nascent pre-rRNA and work in concert to generate RNA folding, modifications, rearrangements and cleavage as well as targeted degradation of pre-ribosomal RNA by the RNA exosome. Its dissociation from the complex determines the transition from state pre-A1 to state pre-A1*. Inhibits mRNA translation in a cytoplasmic polyadenylation element (CPE)-dependent manner. This Bos taurus (Bovine) protein is Neuroguidin (NGDN).